Here is a 191-residue protein sequence, read N- to C-terminus: ATP synthase subunit b 1 (191 aa).

Residues Arg7 to Leu25 traverse the membrane as a helical segment.

It belongs to the ATPase B chain family. In terms of assembly, F-type ATPases have 2 components, F(1) - the catalytic core - and F(0) - the membrane proton channel. F(1) has five subunits: alpha(3), beta(3), gamma(1), delta(1), epsilon(1). F(0) has three main subunits: a(1), b(2) and c(10-14). The alpha and beta chains form an alternating ring which encloses part of the gamma chain. F(1) is attached to F(0) by a central stalk formed by the gamma and epsilon chains, while a peripheral stalk is formed by the delta and b chains.

It is found in the cell inner membrane. Its function is as follows. F(1)F(0) ATP synthase produces ATP from ADP in the presence of a proton or sodium gradient. F-type ATPases consist of two structural domains, F(1) containing the extramembraneous catalytic core and F(0) containing the membrane proton channel, linked together by a central stalk and a peripheral stalk. During catalysis, ATP synthesis in the catalytic domain of F(1) is coupled via a rotary mechanism of the central stalk subunits to proton translocation. In terms of biological role, component of the F(0) channel, it forms part of the peripheral stalk, linking F(1) to F(0). The polypeptide is ATP synthase subunit b 1 (Syntrophotalea carbinolica (strain DSM 2380 / NBRC 103641 / GraBd1) (Pelobacter carbinolicus)).